The chain runs to 1088 residues: RNA-directed RNA polymerase (1088 aa).

One can recognise a RdRp catalytic domain in the interval 501-687; that stretch reads LSYGDVTRFL…AKRYIAGGKI (187 aa).

The protein belongs to the reoviridae RNA-directed RNA polymerase family. As to quaternary structure, interacts with VP3 (Potential). Interacts with VP2; this interaction activates VP1. Interacts with NSP5; this interaction is probably necessary for the formation of functional virus factories. Interacts with NSP2; this interaction is weak. Mg(2+) is required as a cofactor.

It is found in the virion. It catalyses the reaction RNA(n) + a ribonucleoside 5'-triphosphate = RNA(n+1) + diphosphate. In terms of biological role, RNA-directed RNA polymerase that is involved in both transcription and genome replication. Together with VP3 capping enzyme, forms an enzyme complex positioned near the channels situated at each of the five-fold vertices of the core. Following infection, the outermost layer of the virus is lost, leaving a double-layered particle (DLP) made up of the core and VP6 shell. VP1 then catalyzes the transcription of fully conservative plus-strand genomic RNAs that are extruded through the DLP's channels into the cytoplasm where they function as mRNAs for translation of viral proteins. One copy of each of the viral (+)RNAs is also recruited during core assembly, together with newly synthesized polymerase complexes and VP2. The polymerase of these novo-formed particles catalyzes the synthesis of complementary minus-strands leading to dsRNA formation. To do so, the polymerase specifically recognizes and binds 4 bases 5'-UGUG-3' in the conserved 3'-sequence of plus-strand RNA templates. VP2 presumably activates the autoinhibited VP1-RNA complex to coordinate packaging and genome replication. Once dsRNA synthesis is complete, the polymerase switches to the transcriptional mode, thus providing secondary transcription. This is RNA-directed RNA polymerase from Homo sapiens (Human).